An 811-amino-acid polypeptide reads, in one-letter code: Hypoxia-inducible factor 1-alpha (811 aa).

The interval 1 to 27 (MDSPGGVTDKKRISSERRKEKSRDAAR) is disordered. Positions 8-27 (TDKKRISSERRKEKSRDAAR) are enriched in basic and acidic residues. Positions 17–70 (RRKEKSRDAARCRRSKESEVFYELAHQLPLPHTVSAHLDKASIMRLTISYLRMR) constitute a bHLH domain. PAS domains follow at residues 80–157 (TEAN…PVKK) and 228–298 (PHPS…FTKG). The region spanning 302 to 345 (TGQYRMLAKQGGYVWVETQATVIYNTKNSQPQCIVCVNYVLSGI) is the PAC domain. The interval 401–587 (APAAGDTIIS…LSPLESSSSG (187 aa)) is ODD. P402 bears the 4-hydroxyproline mark. Residues 490–518 (PQVQEQPTSPSDASTSQSSPEPSSPNDYC) form a disordered region. Residues 496-514 (PTSPSDASTSQSSPEPSSP) are compositionally biased toward low complexity. Residues 529 to 573 (FKLELVEKLFAIDTEAKNPFSTQETDLDLEMLAPYIPMDDDFQLR) are NTAD. P562 carries the post-translational modification 4-hydroxyproline. Positions 576–785 (DQLSPLESSS…GLPQLTSYDC (210 aa)) are ID. A compositionally biased stretch (polar residues) spans 634-652 (NDTSSAPASPYSGNRSRTA). The disordered stretch occupies residues 634–655 (NDTSSAPASPYSGNRSRTASPI). 2 consecutive short sequence motifs (nuclear localization signal) follow at residues 703-706 (RKRK) and 718-721 (GIGS). The interval 771–811 (SMDESGLPQLTSYDCEVNAPIQGNRNLLQGEELLRALDQVN) is CTAD. N788 bears the (3S)-3-hydroxyasparagine mark.

In terms of assembly, efficient DNA binding requires heterodimerization of an alpha and a beta/ARNT subunit. In terms of processing, in normoxia, is hydroxylated on Pro-402 and Pro-562. The hydroxylated prolines promote interaction with VHL, initiating rapid ubiquitination and subsequent proteasomal degradation. Under hypoxia, proline hydroxylation is impaired and ubiquitination is attenuated, resulting in stabilization. Post-translationally, in normoxia, is hydroxylated on Asn-788, thus abrogating interaction with CREBBP and EP300 and preventing transcriptional activation. The iron and 2-oxoglutarate dependent 3-hydroxylation of asparagine is (S) stereospecific within HIF CTAD domains.

The protein localises to the cytoplasm. Its subcellular location is the nucleus. The protein resides in the nucleus speckle. Its activity is regulated as follows. Induced by reactive oxygen species (ROS). Functionally, functions as a master transcriptional regulator of the adaptive response to hypoxia. Under hypoxic conditions, activates the transcription of over 40 genes, including erythropoietin, glucose transporters, glycolytic enzymes, vascular endothelial growth factor, HILPDA, and other genes whose protein products increase oxygen delivery or facilitate metabolic adaptation to hypoxia. Plays an essential role in embryonic vascularization, tumor angiogenesis and pathophysiology of ischemic disease. This is Hypoxia-inducible factor 1-alpha (HIF1A) from Gallus gallus (Chicken).